A 53-amino-acid chain; its full sequence is UPF0391 membrane protein PputGB1_0151 (53 aa).

2 consecutive transmembrane segments (helical) span residues Trp4–Ala24 and Gly29–Gly49.

Belongs to the UPF0391 family.

It is found in the cell membrane. This is UPF0391 membrane protein PputGB1_0151 from Pseudomonas putida (strain GB-1).